Reading from the N-terminus, the 271-residue chain is S-adenosylmethionine decarboxylase proenzyme (271 aa).

Residue serine 121 is the Schiff-base intermediate with substrate; via pyruvic acid of the active site. Residue serine 121 is modified to Pyruvic acid (Ser); by autocatalysis. The active-site Proton acceptor; for processing activity is histidine 126. Cysteine 149 serves as the catalytic Proton donor; for catalytic activity.

It belongs to the prokaryotic AdoMetDC family. Type 2 subfamily. As to quaternary structure, heterooctamer of four alpha and four beta chains arranged as a tetramer of alpha/beta heterodimers. Pyruvate is required as a cofactor. Is synthesized initially as an inactive proenzyme. Formation of the active enzyme involves a self-maturation process in which the active site pyruvoyl group is generated from an internal serine residue via an autocatalytic post-translational modification. Two non-identical subunits are generated from the proenzyme in this reaction, and the pyruvate is formed at the N-terminus of the alpha chain, which is derived from the carboxyl end of the proenzyme. The post-translation cleavage follows an unusual pathway, termed non-hydrolytic serinolysis, in which the side chain hydroxyl group of the serine supplies its oxygen atom to form the C-terminus of the beta chain, while the remainder of the serine residue undergoes an oxidative deamination to produce ammonia and the pyruvoyl group blocking the N-terminus of the alpha chain.

It carries out the reaction S-adenosyl-L-methionine + H(+) = S-adenosyl 3-(methylsulfanyl)propylamine + CO2. It functions in the pathway amine and polyamine biosynthesis; S-adenosylmethioninamine biosynthesis; S-adenosylmethioninamine from S-adenosyl-L-methionine: step 1/1. In terms of biological role, catalyzes the decarboxylation of S-adenosylmethionine to S-adenosylmethioninamine (dcAdoMet), the propylamine donor required for the synthesis of the polyamines spermine and spermidine from the diamine putrescine. This Clostridium perfringens (strain SM101 / Type A) protein is S-adenosylmethionine decarboxylase proenzyme.